Here is a 772-residue protein sequence, read N- to C-terminus: RNA exonuclease 5 (772 aa).

A compositionally biased stretch (basic and acidic residues) spans 1-10 (MEPEREGTER). A disordered region spans residues 1 to 26 (MEPEREGTERHPRKVRKRRQAPNKLV). A compositionally biased stretch (basic residues) spans 11 to 21 (HPRKVRKRRQA). Residues 228 to 376 (LFGLDCEMCL…EDARIILELA (149 aa)) form the Exonuclease domain. RRM domains are found at residues 505 to 579 (STVY…RPVT) and 600 to 679 (GSIY…RHLH).

In Macaca fascicularis (Crab-eating macaque), this protein is RNA exonuclease 5 (REXO5).